The sequence spans 810 residues: Lon protease (810 aa).

The Lon N-terminal domain maps to 32 to 226 (LPAIAMRSNM…RILDILARET (195 aa)). 376-383 (GPPGVGKT) contributes to the ATP binding site. Residues 612 to 791 (KPMIGVTTGL…EEVLEVALNE (180 aa)) form the Lon proteolytic domain. Catalysis depends on residues Ser-697 and Lys-740.

Belongs to the peptidase S16 family. Homohexamer. Organized in a ring with a central cavity.

The protein resides in the cytoplasm. The enzyme catalyses Hydrolysis of proteins in presence of ATP.. Its function is as follows. ATP-dependent serine protease that mediates the selective degradation of mutant and abnormal proteins as well as certain short-lived regulatory proteins. Required for cellular homeostasis and for survival from DNA damage and developmental changes induced by stress. Degrades polypeptides processively to yield small peptide fragments that are 5 to 10 amino acids long. Binds to DNA in a double-stranded, site-specific manner. This is Lon protease from Fervidobacterium nodosum (strain ATCC 35602 / DSM 5306 / Rt17-B1).